The primary structure comprises 909 residues: Zinc finger and BTB domain-containing protein 41 (909 aa).

The BTB domain occupies 88–152; it reads CDLLIIVEGK…LYTSEFFVYK (65 aa). The C2H2-type 1 zinc-finger motif lies at 207–230; the sequence is HQCKFCSRHFCYKKSLENHLAKTH. A disordered region spans residues 252–344; sequence RSKRNRKCPV…PEAGDSVGNV (93 aa). The span at 266–275 shows a compositional bias: acidic residues; the sequence is TSDDEQESGD. The span at 284-295 shows a compositional bias: basic and acidic residues; it reads NFDKEKSDRNDS. Positions 296–322 are enriched in acidic residues; the sequence is EDPGSEYNAEEDELEEEMSDEYSDIEE. 13 consecutive C2H2-type zinc fingers follow at residues 361–383, 389–411, 422–445, 463–485, 491–514, 518–541, 547–569, 575–597, 603–625, 631–654, 668–690, 696–718, and 724–747; these read LQCPKCDKTFDRIGKYESHTRVH, FECDICHQRYSTKSNLTVHRKKH, HKCPYCNKLHASKKTLAKHVKRFH, WKCDICKKSFTRRPHLEEHMILH, FKCTYCEEHFKSRFARLKHQEKFH, FPCDICGRQFNDTGNLKRHIECTH, WTCFICGKSVRERTTLKEHLRIH, HLCSICGQSFRHGSSYRLHLRVH, YECDECGKTFIRHDHLTKHKKIH, HQCEECGKCFGRRDHLTVHYKSVH, HQCDVCKKIFKGKSSLEMHFRTH, YKCQICNQSFRIKKTLTKHLVIH, and FNCQHCNATFKRKDKLKYHIDHVH.

It is found in the nucleus. Its function is as follows. May be involved in transcriptional regulation. This is Zinc finger and BTB domain-containing protein 41 (ZBTB41) from Homo sapiens (Human).